Here is a 70-residue protein sequence, read N- to C-terminus: U-scoloptoxin(20)-Sm1a (70 aa).

A signal peptide spans 1–24 (MKKRSQVFCIFIAMVLLILPLSMS).

This sequence belongs to the scoloptoxin-20 family. In terms of processing, contains 3 disulfide bonds. As to expression, expressed by the venom gland.

It localises to the secreted. The chain is U-scoloptoxin(20)-Sm1a from Scolopendra morsitans (Tanzanian blue ringleg centipede).